We begin with the raw amino-acid sequence, 90 residues long: MSSLVYIAFQDNDNARYVVEAIIQDNPHAVVQHHPAMIRIEAEKRLEIRRETVEENLGRAWDVQEMLVDVITIGGNVDEDDDRFVLEWKN.

It belongs to the TmoD/XamoD family. As to quaternary structure, active as a monomer. Formation of dimers inactivates the protein. The multicomponent enzyme phenol hydroxylase is formed by DmpL (P1 component), DmpM (P2 component), DmpN (P3 component), DmpO (P4 component) and DmpP (P5 component).

The enzyme catalyses phenol + NADH + O2 + H(+) = catechol + NAD(+) + H2O. The protein operates within aromatic compound metabolism; phenol degradation. Part of a multicomponent enzyme which catalyzes the degradation of phenol and some of its methylated derivatives. DmpM is a regulatory subunit that stimulates the phenol hydroxylase activity of the complex. The steady-state rate of phenol hydroxylase turnover is dependent on the DmpM concentration, with a maximum observed rate at about 1.5 DmpM per oxygenase monomer. Higher concentrations of DmpM inhibit phenol hydroxylase activity. May act by altering the redox potential of the oxygenase. Required for growth on phenol and for in vitro phenol hydroxylase activity. This is Phenol 2-monooxygenase, stimulatory component DmpM from Pseudomonas sp. (strain CF600).